A 369-amino-acid chain; its full sequence is Flagellar P-ring protein (369 aa).

The first 23 residues, 1–23 (MRIASFFTVLLTLLTLNIAPASA), serve as a signal peptide directing secretion.

The protein belongs to the FlgI family. As to quaternary structure, the basal body constitutes a major portion of the flagellar organelle and consists of four rings (L,P,S, and M) mounted on a central rod.

It is found in the periplasm. Its subcellular location is the bacterial flagellum basal body. Functionally, assembles around the rod to form the L-ring and probably protects the motor/basal body from shearing forces during rotation. The protein is Flagellar P-ring protein of Pectobacterium carotovorum subsp. carotovorum (strain PC1).